Here is a 525-residue protein sequence, read N- to C-terminus: D-aminopeptidase (525 aa).

The Nucleophile role is filled by S62. Residue K65 is the Proton donor/acceptor of the active site. An important for specificity region spans residues 485–495 (PRALDHTAPGD). D489 is a substrate binding site.

Belongs to the peptidase S12 family. In terms of assembly, homodimer.

It carries out the reaction Release of an N-terminal D-amino acid from a peptide, Xaa-|-Yaa-, in which Xaa is preferably D-Ala, D-Ser or D-Thr. D-amino acid amides and methyl esters also are hydrolyzed, as is glycine amide.. Its activity is regulated as follows. Inhibited by beta-lactam compounds such as 6-aminopenicillic acid, 7-aminocephalosporanic acid, benzylpenicillin and ampicillin. Inhibited by p-chloromercuribenzoate. Functionally, hydrolyzes N-terminal residues in D-amino acid-containing peptides. In Gluconobacter oxydans (strain 621H) (Gluconobacter suboxydans), this protein is D-aminopeptidase.